The primary structure comprises 125 residues: RxLR effector protein Avh6 (125 aa).

The signal sequence occupies residues 1–25; that stretch reads MRLSSTTFVVLAAVLLASGTAVSKA. A RxLR-dEER motif is present at residues 48–70; sequence RFLRSHHTEDGKAKLSNYDNEER.

The protein belongs to the RxLR effector family.

It is found in the secreted. The protein resides in the host cell. Functionally, effector that suppresses plant defense responses during the early stages of pathogen infection. Suppresses cell death induced by effectors and PAMPs in plant hosts. Triggers a hypersensitive response (HR) in the presence of Rps1d. Suppresses BAX-induced cell death and enhanced P.capsici infection in Nicotiana benthamiana. Also suppresses effector-triggered immunity induction by associating with Avr1b and Rps1b, suggesting a role in suppressing plant immunity. In Phytophthora sojae (Soybean stem and root rot agent), this protein is RxLR effector protein Avh6.